The following is a 605-amino-acid chain: Poly [ADP-ribose] polymerase 2-B (605 aa).

A disordered region spans residues 96 to 122 (NAAAAAAVTDGGDQDKTKSAKDDDGDD). Positions 108–122 (DQDKTKSAKDDDGDD) are enriched in basic and acidic residues. The WGR domain maps to 153–260 (AYHVLQVGDE…TKLETRTASF (108 aa)). Residues 250–370 (ETKLETRTAS…EIEIAIKLLE (121 aa)) form the PARP alpha-helical domain. Residues 378–605 (HPLYARYKQF…NVNFNFKRWG (228 aa)) form the PARP catalytic domain.

The protein belongs to the ARTD/PARP family.

It is found in the nucleus. It catalyses the reaction NAD(+) + (ADP-D-ribosyl)n-acceptor = nicotinamide + (ADP-D-ribosyl)n+1-acceptor + H(+).. It carries out the reaction L-aspartyl-[protein] + NAD(+) = 4-O-(ADP-D-ribosyl)-L-aspartyl-[protein] + nicotinamide. The enzyme catalyses L-glutamyl-[protein] + NAD(+) = 5-O-(ADP-D-ribosyl)-L-glutamyl-[protein] + nicotinamide. In terms of biological role, involved in the base excision repair (BER) pathway, by catalyzing the poly(ADP-ribosyl)ation of a limited number of acceptor proteins involved in chromatin architecture and in DNA metabolism. This modification follows DNA damages and appears as an obligatory step in a detection/signaling pathway leading to the reparation of DNA strand breaks. The polypeptide is Poly [ADP-ribose] polymerase 2-B (PARP2-B) (Oryza sativa subsp. japonica (Rice)).